A 1190-amino-acid polypeptide reads, in one-letter code: Ras-specific guanine nucleotide-releasing factor 2 (1190 aa).

Positions 22 to 133 constitute a PH 1 domain; it reads EGTKRGFLSK…WMEAIHQASY (112 aa). A coiled-coil region spans residues 155–193; the sequence is ETEKIAANQLRHQLEDQDTEIERLKSEIVALNKTKERMR. Residues 205–234 enclose the IQ domain; that stretch reads DIKKIKKVQSFMRGWLCRRKWKTIVQDYIC. Residues 243–429 form the DH domain; it reads KRNQIVFTMV…EELSRVMHDE (187 aa). Residues 470-588 form the PH 2 domain; the sequence is PSVERGKLSK…WMSDISQCVD (119 aa). Residues 635-755 form the N-terminal Ras-GEF domain; it reads KVPQIRYASV…LTSSLNSRIG (121 aa). Residues 713–744 are disordered; sequence VDGKSPRLCRKFSSPPPLAVSRTSSPVRARKL. Phosphoserine occurs at positions 725 and 726. Ser-736 is modified (phosphoserine; by CDK5). Positions 743-751 are regulates proteasomal degradation; the sequence is KLSLTSSLN. 2 positions are modified to phosphoserine: Ser-745 and Ser-749. The tract at residues 757–826 is disordered; the sequence is LDLTTSSSSS…QPGGQVADST (70 aa). Residues 760 to 776 show a composition bias toward low complexity; it reads TTSSSSSSPTTTVHSPA. Residues 798–810 show a composition bias toward polar residues; the sequence is TDMSPCRSPSTTP. Phosphoserine occurs at positions 801, 805, and 925. The region spanning 955–1187 is the Ras-GEF domain; it reads SAMELAEQIT…YELSLKIEPR (233 aa). The segment at 1052 to 1081 is responsible of the affinity for farnesylated versus geranylgeranylated Ras; it reads ALNRSAIYRLKKTWTKVSKQTKALMDKLQK.

Homooligomer and heterooligomer with RASGRF1. Interacts with Ras and RAC1. Interacts in a calcium-dependent manner with calmodulin. Interacts with CDK5R1 and probably EPB49. Interacts with the AMPA receptor through GRIA1. Interacts with microtubules. In terms of processing, phosphorylated by CDK5; down-regulates RASGRF2-mediated RAC1 activation. Post-translationally, ubiquitinated upon interaction with Ras. Ubiquitination leads to degradation through the 26S proteasome. In terms of tissue distribution, widely expressed. Detected in brain, lung, spleen, pancreas, kidney, liver, heart, mammary gland and skeletal muscle.

It localises to the cytoplasm. The protein localises to the cell membrane. It is found in the endoplasmic reticulum membrane. In terms of biological role, functions as a calcium-regulated nucleotide exchange factor activating both Ras and RAC1 through the exchange of bound GDP for GTP. Preferentially activates HRAS in vivo compared to RRAS based on their different types of prenylation. Functions in synaptic plasticity by contributing to the induction of long term potentiation. This is Ras-specific guanine nucleotide-releasing factor 2 (Rasgrf2) from Rattus norvegicus (Rat).